The chain runs to 465 residues: MTRVNQLPCDCVSTAEESLTSGTCITPTHVTSLSSPLDRSGDVDPLPVSDESGGSKADESMTDADETKKRKRILSGDCEADENNKSDGEIASLNDGVDAFTAICEDLNCSLCNQLPDRPVTILCGHNFCLKCFDKWIDQGNQICATCRSTIPDKMAANPRVNSSLVSVIRYVKVAKTAGVGTANFFPFTSNQDGPENAFRTKRAKIGEENAARIYVTVPFDHFGPIPAEHDPVRNQGVLVGESWENRVECRQWGVHLPHVSCIAGQEDYGAQSVVISGGYKDDEDHGEWFLYTGRSRGRHFANEDQEFEDLNEALRVSCEMGYPVRVVRSYKDRYSAYAPKEGVRYDGVYRIEKCWRKARFPDSFKVCRYLFVRCDNEPAPWNSDESGDRPRPLPNIPELETASDLFERKESPSWDFDEAEGRWRWMKPPPANHEQRERMKMAMTCLLLFVLIILVGSSSILYQY.

The tract at residues 31-69 (TSLSSPLDRSGDVDPLPVSDESGGSKADESMTDADETKK) is disordered. Residues 109 to 148 (CSLCNQLPDRPVTILCGHNFCLKCFDKWIDQGNQICATCR) form an RING-type zinc finger. The 142-residue stretch at 233–374 (VRNQGVLVGE…FKVCRYLFVR (142 aa)) folds into the YDG domain. A helical transmembrane segment spans residues 442 to 462 (MAMTCLLLFVLIILVGSSSIL).

It is found in the nucleus. It localises to the membrane. It catalyses the reaction S-ubiquitinyl-[E2 ubiquitin-conjugating enzyme]-L-cysteine + [acceptor protein]-L-lysine = [E2 ubiquitin-conjugating enzyme]-L-cysteine + N(6)-ubiquitinyl-[acceptor protein]-L-lysine.. The protein operates within protein modification; protein ubiquitination. E3 ubiquitin-protein ligase. May participate in methylation-dependent transcriptional regulation. Mediates ubiquitination with the E2 ubiquitin-conjugating enzyme UBC11. In Arabidopsis thaliana (Mouse-ear cress), this protein is E3 ubiquitin-protein ligase ORTHRUS-LIKE 1 (ORTHL).